A 454-amino-acid chain; its full sequence is UPF0210 protein Memar_2269 (454 aa).

The protein belongs to the UPF0210 family.

In Methanoculleus marisnigri (strain ATCC 35101 / DSM 1498 / JR1), this protein is UPF0210 protein Memar_2269.